The following is a 156-amino-acid chain: Small ribosomal subunit protein uS7 (156 aa).

Belongs to the universal ribosomal protein uS7 family. As to quaternary structure, part of the 30S ribosomal subunit. Contacts proteins S9 and S11.

Functionally, one of the primary rRNA binding proteins, it binds directly to 16S rRNA where it nucleates assembly of the head domain of the 30S subunit. Is located at the subunit interface close to the decoding center, probably blocks exit of the E-site tRNA. The sequence is that of Small ribosomal subunit protein uS7 from Alkaliphilus oremlandii (strain OhILAs) (Clostridium oremlandii (strain OhILAs)).